The sequence spans 111 residues: uncharacterized protein (111 aa).

One can recognise an HIT domain in the interval 4 to 111 (IFERIIEGAV…LGGGLLGSIA (108 aa)). The Histidine triad motif motif lies at 96-100 (HLHIH).

This is an uncharacterized protein from Chlamydia trachomatis serovar D (strain ATCC VR-885 / DSM 19411 / UW-3/Cx).